Here is a 141-residue protein sequence, read N- to C-terminus: Lutropin subunit beta (141 aa).

The N-terminal stretch at 1 to 20 is a signal peptide; the sequence is MERLQGLLLWLLLSPSVVWA. 6 cysteine pairs are disulfide-bonded: cysteine 29–cysteine 77, cysteine 43–cysteine 92, cysteine 46–cysteine 130, cysteine 54–cysteine 108, cysteine 58–cysteine 110, and cysteine 113–cysteine 120. A glycan (N-linked (GlcNAc...) asparagine) is linked at asparagine 33.

The protein belongs to the glycoprotein hormones subunit beta family. As to quaternary structure, heterodimer of a common alpha chain and a unique beta chain which confers biological specificity to thyrotropin, lutropin, follitropin and gonadotropin.

It is found in the secreted. In terms of biological role, promotes spermatogenesis and ovulation by stimulating the testes and ovaries to synthesize steroids. In Rattus norvegicus (Rat), this protein is Lutropin subunit beta (Lhb).